The sequence spans 947 residues: Translation initiation factor IF-2 (947 aa).

Residues 55 to 361 (TKDAQAGSAK…PVTERKFHEL (307 aa)) are disordered. Over residues 63-73 (AKDKQVAEQKA) the composition is skewed to basic and acidic residues. Residues 76 to 90 (AKATTPQPAAATQEA) show a composition bias toward low complexity. Composition is skewed to basic and acidic residues over residues 103 to 116 (FKAE…EQAA), 125 to 134 (SNDRKSDYRQ), and 170 to 183 (NDGH…DKNR). The span at 190-204 (RQQDTGRQGQTQAGA) shows a compositional bias: low complexity. Composition is skewed to basic and acidic residues over residues 225–249 (ARQR…RQEA), 257–267 (QTEDKKHREAS), and 294–311 (NRPD…DGQK). Low complexity predominate over residues 316–334 (SWNSQNQVRNQKNSNWNNN). Basic residues predominate over residues 335–345 (KKNKKGKHHKN). The 170-residue stretch at 448–617 (ERAPVVTIMG…LLVAEVEELK (170 aa)) folds into the tr-type G domain. A G1 region spans residues 457-464 (GHVDHGKT). Residue 457 to 464 (GHVDHGKT) coordinates GTP. The tract at residues 482–486 (GITQH) is G2. A G3 region spans residues 503–506 (DTPG). GTP is bound by residues 503 to 507 (DTPGH) and 557 to 560 (NKID). Residues 557–560 (NKID) form a G4 region. Residues 593 to 595 (SAK) are G5.

The protein belongs to the TRAFAC class translation factor GTPase superfamily. Classic translation factor GTPase family. IF-2 subfamily.

The protein localises to the cytoplasm. In terms of biological role, one of the essential components for the initiation of protein synthesis. Protects formylmethionyl-tRNA from spontaneous hydrolysis and promotes its binding to the 30S ribosomal subunits. Also involved in the hydrolysis of GTP during the formation of the 70S ribosomal complex. The polypeptide is Translation initiation factor IF-2 (Streptococcus equi subsp. zooepidemicus (strain MGCS10565)).